Reading from the N-terminus, the 193-residue chain is Interleukin-18 (193 aa).

Residues 1–36 constitute a propeptide that is removed on maturation; the sequence is MAANLIEDNCINLVKMKFVNNTLYFKAESDEGLESD.

The protein belongs to the IL-1 family. In terms of assembly, forms a ternary complex with ligand-binding receptor subunit IL18R1 and signaling receptor subunit IL18RAP at the plasma membrane. Mature IL18 first binds to IL18R1 forming a low affinity binary complex, which then interacts with IL18RAP to form a high affinity ternary complex that signals inside the cell. Interacts with cargo receptor TMED10; the interaction mediates the translocation from the cytoplasm into the ERGIC (endoplasmic reticulum-Golgi intermediate compartment) and thereby secretion. The pro-IL-18 precursor is processed by CASP1, CASP4 or CASP5 to yield its mature, active form. The pro-IL-18 precursor features autoinhibitory interactions between the propeptide and the post-cleavage-site region, preventing recognition by the IL18R1 receptor. Processing by CASP1, CASP4 or CASP5 induces conformational changes to generate critical receptor-binding sites. The mature form is then secreted and released in the extracellular milieu by passing through the gasdermin-D (GSDMD) pore. In contrast, cleavage by CASP3 inactivates IL18.

The protein resides in the cytoplasm. It is found in the cytosol. The protein localises to the secreted. In terms of biological role, pro-inflammatory cytokine primarily involved in epithelial barrier repair, polarized T-helper 1 (Th1) cell and natural killer (NK) cell immune responses. Upon binding to IL18R1 and IL18RAP, forms a signaling ternary complex which activates NF-kappa-B, triggering synthesis of inflammatory mediators. Synergizes with IL12/interleukin-12 to induce IFNG synthesis from T-helper 1 (Th1) cells and natural killer (NK) cells. Involved in transduction of inflammation downstream of pyroptosis: its mature form is specifically released in the extracellular milieu by passing through the gasdermin-D (GSDMD) pore. This Canis lupus familiaris (Dog) protein is Interleukin-18 (IL18).